We begin with the raw amino-acid sequence, 269 residues long: Propanediol uptake facilitator PduF (269 aa).

Helical transmembrane passes span 10 to 30 and 42 to 62; these read IAEF…LSAL and ICII…GISG. The short motif at 66–68 is the NPA 1 element; sequence NPA. The next 3 membrane-spanning stretches (helical) occupy residues 69–89, 143–163, and 179–199; these read ITIA…PYTV, VWQA…MIMA, and LLIG…TGFA. The short motif at 201-203 is the NPA 2 element; the sequence is NPA. Residues 228 to 248 form a helical membrane-spanning segment; it reads IPYFIVPIVAPIIGACAGAAI.

It belongs to the MIP/aquaporin (TC 1.A.8) family.

The protein localises to the cell inner membrane. Its function is as follows. Probably facilitates diffusion of 1,2-propanediol (1,2-PD) into the cell. This Citrobacter freundii protein is Propanediol uptake facilitator PduF.